The chain runs to 227 residues: Probable minor pilin MMP0600 (227 aa).

Positions 1-7 are excised as a propeptide; the sequence is MAKFSKG. A QXSXEXXXL motif is present at residues 8–16; sequence QISIELILL.

Post-translationally, the N-terminus is probably cleaved by the prepilin peptidase EppA, which recognizes the class III signal sequence.

Its subcellular location is the secreted. The protein resides in the cell surface. It is found in the fimbrium. This chain is Probable minor pilin MMP0600, found in Methanococcus maripaludis (strain DSM 14266 / JCM 13030 / NBRC 101832 / S2 / LL).